We begin with the raw amino-acid sequence, 369 residues long: Capsid protein (369 aa).

It is found in the host nucleus. It localises to the virion. Functionally, self-assembles to form the virion icosahedral capsid. This chain is Capsid protein, found in Avon-Heathcote Estuary associated kieseladnavirus (AHEaBV).